Consider the following 402-residue polypeptide: Beta sliding clamp (402 aa).

Belongs to the beta sliding clamp family. In terms of assembly, forms a ring-shaped head-to-tail homodimer around DNA which binds and tethers DNA polymerases and other proteins to the DNA. The DNA replisome complex has a single clamp-loading complex (3 tau and 1 each of delta, delta', psi and chi subunits) which binds 3 Pol III cores (1 core on the leading strand and 2 on the lagging strand) each with a beta sliding clamp dimer. Additional proteins in the replisome are other copies of gamma, psi and chi, Ssb, DNA helicase and RNA primase.

It is found in the cytoplasm. Functionally, confers DNA tethering and processivity to DNA polymerases and other proteins. Acts as a clamp, forming a ring around DNA (a reaction catalyzed by the clamp-loading complex) which diffuses in an ATP-independent manner freely and bidirectionally along dsDNA. Initially characterized for its ability to contact the catalytic subunit of DNA polymerase III (Pol III), a complex, multichain enzyme responsible for most of the replicative synthesis in bacteria; Pol III exhibits 3'-5' exonuclease proofreading activity. The beta chain is required for initiation of replication as well as for processivity of DNA replication. This chain is Beta sliding clamp (dnaN), found in Mycobacterium tuberculosis (strain CDC 1551 / Oshkosh).